A 516-amino-acid chain; its full sequence is Alstonine synthase (516 aa).

The helical transmembrane segment at 6–26 threads the bilayer; sequence NFSLTSPIFLLLSSLFLIILL. Position 453 (Cys-453) interacts with heme.

It belongs to the cytochrome P450 family. Requires heme as cofactor. Highly expressed in stems. Expressed at low levels in roots.

The protein localises to the endoplasmic reticulum membrane. The enzyme catalyses tetrahydroalstonine + A + reduced [NADPH--hemoprotein reductase] + O2 = alstonine + AH2 + oxidized [NADPH--hemoprotein reductase] + 2 H2O + H(+). It catalyses the reaction ajmalicine + A + reduced [NADPH--hemoprotein reductase] + O2 = serpentine + AH2 + oxidized [NADPH--hemoprotein reductase] + 2 H2O + H(+). Its pathway is alkaloid biosynthesis. Functionally, involved in monoterpene indole alkaloids (MIAs) biosynthesis. Converts by aromatization the tetrahydro-beta-carboline alkaloids tetrahydroalstonine and ajmalicine to the corresponding beta-carboline alkaloids alstonine and serpentine, respectively. This Catharanthus roseus (Madagascar periwinkle) protein is Alstonine synthase.